The chain runs to 518 residues: Serine--tRNA ligase, mitochondrial (518 aa).

Residues 1–34 (MAASMARLWWPFLARQGLRSRGRCVCSQNPRRSF) constitute a mitochondrion transit peptide. The residue at position 110 (Lys110) is an N6-acetyllysine. Lys195 carries the N6-succinyllysine modification. Residue 299-301 (TAE) participates in L-serine binding. 330–332 (RAE) serves as a coordination point for ATP. At Lys337 the chain carries N6-succinyllysine. Position 345 (Val345) interacts with ATP. Glu352 contacts L-serine. 418-421 (EVTS) contributes to the ATP binding site. Thr453 contacts L-serine. Residues 497 to 518 (PLQYIGPNQPQKPRLPGQSATR) are disordered.

It belongs to the class-II aminoacyl-tRNA synthetase family. Type-1 seryl-tRNA synthetase subfamily. As to quaternary structure, homodimer. The tRNA molecule probably binds across the dimer. In terms of tissue distribution, ubiquitous.

It localises to the mitochondrion matrix. It catalyses the reaction tRNA(Ser) + L-serine + ATP = L-seryl-tRNA(Ser) + AMP + diphosphate + H(+). It carries out the reaction tRNA(Sec) + L-serine + ATP = L-seryl-tRNA(Sec) + AMP + diphosphate + H(+). It participates in aminoacyl-tRNA biosynthesis; selenocysteinyl-tRNA(Sec) biosynthesis; L-seryl-tRNA(Sec) from L-serine and tRNA(Sec): step 1/1. Its function is as follows. Catalyzes the attachment of serine to tRNA(Ser). Is also probably able to aminoacylate tRNA(Sec) with serine, to form the misacylated tRNA L-seryl-tRNA(Sec), which will be further converted into selenocysteinyl-tRNA(Sec). The protein is Serine--tRNA ligase, mitochondrial (Sars2) of Mus musculus (Mouse).